Reading from the N-terminus, the 408-residue chain is MVKYALLPLVAVSLVQAGGPEWHHSRTADFAVDPKVHKGCTSWINVVDASGKLTCDAFLDTINVAKRQFIFWNPQLNSDCSNIQSKASYCAFLPSHVSKQTRGQMDPPPKTKPLPPGLFNDWGNNHAQKRNDPPPKTKPLPPGLFNDWGNNGARKRDGLSPTGGLGDFHGPKEAPPPDWGHKGVVEGNHGNTMSTRSPIMGTGLPEQQSEPAFMPPHIPNLPNGMENKMVVHATTLTKKLRPTGSYVKRDANAPAPTPGSVGVAIVGCKQYHTVKAKDTCFNIAQQYPGLLFSDFLRLNPPPSNLDTVCSNLKANTRVCVKGDTKTNLVPTPSAAVGVHARDVQGWPSPTKPGTNPGCKSFELVKKGDSCEGVARKHHISVAQLKQWNPAVGPTCEKLEIGYYACVRV.

Residues 1-17 (MVKYALLPLVAVSLVQA) form the signal peptide. Residues 42–91 (SWINVVDASGKLTCDAFLDTINVAKRQFIFWNPQLNSDCSNIQSKASYCA) form the LysM 1 domain. The disordered stretch occupies residues 98–178 (SKQTRGQMDP…HGPKEAPPPD (81 aa)). Residues 106–116 (DPPPKTKPLPP) show a composition bias toward pro residues. 2 consecutive LysM domains span residues 270-320 (QYHT…RVCV) and 360-406 (SFEL…YACV).

Its subcellular location is the secreted. Its function is as follows. Might have a role in sequestration of chitin oligosaccharides (breakdown products of fungal cell walls that are released during invasion and act as triggers of host immunity) to dampen host defense. This chain is LysM domain-containing protein ARB_01488, found in Arthroderma benhamiae (strain ATCC MYA-4681 / CBS 112371) (Trichophyton mentagrophytes).